A 337-amino-acid chain; its full sequence is 1-aminocyclopropane-1-carboxylate deaminase (337 aa).

Lys-50 is subject to N6-(pyridoxal phosphate)lysine. Ser-77 acts as the Nucleophile in catalysis.

This sequence belongs to the ACC deaminase/D-cysteine desulfhydrase family. As to quaternary structure, homotrimer. The cofactor is pyridoxal 5'-phosphate.

The enzyme catalyses 1-aminocyclopropane-1-carboxylate + H2O = 2-oxobutanoate + NH4(+). Its function is as follows. Catalyzes a cyclopropane ring-opening reaction, the irreversible conversion of 1-aminocyclopropane-1-carboxylate (ACC) to ammonia and alpha-ketobutyrate. Allows growth on ACC as a nitrogen source. This chain is 1-aminocyclopropane-1-carboxylate deaminase, found in Rhizobium rhizogenes (strain K84 / ATCC BAA-868) (Agrobacterium radiobacter).